A 294-amino-acid polypeptide reads, in one-letter code: Putative deoxyribonuclease TATDN3 (294 aa).

Residues His-9, His-11, Glu-104, His-144, His-167, and Asp-215 each coordinate Zn(2+).

Belongs to the metallo-dependent hydrolases superfamily. TatD-type hydrolase family. It depends on Mn(2+) as a cofactor. Requires Ca(2+) as cofactor. Mg(2+) is required as a cofactor. The cofactor is Zn(2+).

It localises to the nucleus. With respect to regulation, the 3'-exonuclease activity is sensitive to the metal ion present in the active site, whereas the AP endodeoxyribonuclease activity is observed in a variety of divalent metal cofactors. 3'-exoxonuclease activity is suppressed in the presence of Ca(2+), Zn(2+) and Ni(2+). Exhibits 3'-exonuclease activities and apurinic/apyrimidinic (AP) endonuclease (in vitro). Show preferential AP endonuclease activity on double-stranded DNA substrates and 3'- exonuclease activity on single-stranded DNA. The polypeptide is Putative deoxyribonuclease TATDN3 (Tatdn3) (Mus musculus (Mouse)).